A 159-amino-acid chain; its full sequence is Ribosomal RNA large subunit methyltransferase H (159 aa).

S-adenosyl-L-methionine-binding positions include isoleucine 76, glycine 108, and 127 to 132 (FSKMTF).

It belongs to the RNA methyltransferase RlmH family. Homodimer.

Its subcellular location is the cytoplasm. The catalysed reaction is pseudouridine(1915) in 23S rRNA + S-adenosyl-L-methionine = N(3)-methylpseudouridine(1915) in 23S rRNA + S-adenosyl-L-homocysteine + H(+). Its function is as follows. Specifically methylates the pseudouridine at position 1915 (m3Psi1915) in 23S rRNA. The protein is Ribosomal RNA large subunit methyltransferase H of Clostridium botulinum (strain Loch Maree / Type A3).